A 226-amino-acid polypeptide reads, in one-letter code: Glyceraldehyde 3-phosphate phosphatase (226 aa).

The protein belongs to the HAD-like hydrolase superfamily. Mg(2+) serves as cofactor.

Its function is as follows. Catalyzes the dephosphorylation of D,L-glyceraldehyde 3-phosphate in vitro. The chain is Glyceraldehyde 3-phosphate phosphatase from Methanothermobacter thermautotrophicus (strain ATCC 29096 / DSM 1053 / JCM 10044 / NBRC 100330 / Delta H) (Methanobacterium thermoautotrophicum).